The primary structure comprises 160 residues: Type-1 angiotensin II receptor-associated protein (160 aa).

Topologically, residues 1-9 (MELPAVNLK) are extracellular. The helical transmembrane segment at 10-30 (VILLVHWLLTTWGCLAFSGSY) threads the bilayer. The Cytoplasmic portion of the chain corresponds to 31 to 53 (AWGNFTILALGVWAVAQRDSVDA). The helical transmembrane segment at 54 to 74 (IGMFLGGLVATIFLDIIYISI) threads the bilayer. The Extracellular portion of the chain corresponds to 75 to 86 (FYSSVAVGDTGR). The helical transmembrane segment at 87–107 (FSAGMAIFSLLLKPFSCCLVY) threads the bilayer. The Cytoplasmic segment spans residues 108–160 (HMHRERGGELPLRSDFFGPSQEHSAYQTIDSSDSPADPLASLENKGQAAPRGY). The interval 110–122 (HRERGGELPLRSD) is interaction with AGTR1. Phosphoserine is present on Ser127. Residues 128 to 160 (QEHSAYQTIDSSDSPADPLASLENKGQAAPRGY) are disordered. A Phosphothreonine modification is found at Thr135. A compositionally biased stretch (low complexity) spans 137-149 (DSSDSPADPLASL). The residue at position 138 (Ser138) is a Phosphoserine.

In terms of assembly, interacts with RACK1, and with the carboxy-terminal region of AGTR1.

The protein localises to the endoplasmic reticulum membrane. The protein resides in the golgi apparatus membrane. It is found in the cytoplasmic vesicle membrane. Functionally, appears to be a negative regulator of type-1 angiotensin II receptor-mediated signaling by regulating receptor internalization as well as mechanism of receptor desensitization such as phosphorylation. May play a role of negative regulator in cardiomyocyte hypertrophy induced by angiotensin II through an inhibition of p38 mitogen-activated protein kinase pathway. Attenuates type-1 angiotensin II receptor growth promoting effect and angiotensin II-induced phosphorylation of protein kinase AKT and of STAT3. In Rattus norvegicus (Rat), this protein is Type-1 angiotensin II receptor-associated protein (Agtrap).